Reading from the N-terminus, the 631-residue chain is Chaperone protein DnaK (631 aa).

Thr197 carries the post-translational modification Phosphothreonine; by autocatalysis. Residues 598 to 631 are disordered; it reads MYKKEQGQTGGTEQGGTEQKKSGGDDDVIDAEVE. Positions 622-631 are enriched in acidic residues; sequence DDDVIDAEVE.

Belongs to the heat shock protein 70 family.

In terms of biological role, acts as a chaperone. This chain is Chaperone protein DnaK, found in Nitratiruptor sp. (strain SB155-2).